Reading from the N-terminus, the 198-residue chain is Paired-like homeodomain transcription factor LEUTX (198 aa).

The homeobox DNA-binding region spans P33–Q67. Positions R65–V133 are disordered. The interval P79–E190 is LEUTX region. A compositionally biased stretch (basic and acidic residues) spans A110–S119. 4 consecutive short sequence motifs (9aaTAD) follow at residues G125–W136, P153–E161, D163–L171, and S178–P186.

It belongs to the paired homeobox family.

The protein localises to the nucleus. Functionally, paired-like homeobox transcription factor involved in embryogenesis. May act as a regulator of embryo genome activation. Binds to a 36 bp DNA elements containing a 5'-TAATCC-3' sequence motif, referred to as EEA motif (EGA-enriched Alu-motif), present in the promoters of target genes activated in early embryos. Inactive transcriptional activity. This Homo sapiens (Human) protein is Paired-like homeodomain transcription factor LEUTX.